The primary structure comprises 493 residues: Neuronal pentraxin receptor (493 aa).

Residues methionine 1 to lysine 2 lie on the Cytoplasmic side of the membrane. The chain crosses the membrane as a helical; Signal-anchor for type II membrane protein span at residues phenylalanine 3–isoleucine 23. Topologically, residues alanine 24–alanine 493 are extracellular. The tract at residues proline 37–valine 72 is disordered. The N-linked (GlcNAc...) asparagine glycan is linked to asparagine 42. Positions serine 57–valine 72 are enriched in low complexity. N-linked (GlcNAc...) asparagine glycosylation occurs at asparagine 211. Residues aspartate 285–cysteine 487 form the Pentraxin (PTX) domain. A disulfide bridge connects residues cysteine 315 and cysteine 376. Residues asparagine 340, glutamate 418, glutamine 419, aspartate 420, and glutamine 430 each coordinate Ca(2+). Asparagine 456 carries an N-linked (GlcNAc...) asparagine glycan.

As to quaternary structure, heteropentamer with NPTX1 and/or NPTX2. Also binds taipoxin-associated calcium-binding protein 49 (TCBP49/RCN2). Interacts with KLHL2. The cofactor is Ca(2+). In terms of processing, ubiquitinated by a cullin-RING-based BCR (BTB-CUL3-RBX1) E3 ubiquitin-protein ligase complex containing KLHL2.

Its subcellular location is the membrane. In terms of biological role, may be involved in mediating uptake of synaptic material during synapse remodeling or in mediating the synaptic clustering of AMPA glutamate receptors at a subset of excitatory synapses. The chain is Neuronal pentraxin receptor (Nptxr) from Mus musculus (Mouse).